A 320-amino-acid polypeptide reads, in one-letter code: Malate dehydrogenase (320 aa).

Residues 10–15 (GSGMIG) and D34 contribute to the NAD(+) site. Residues R83 and R89 each coordinate substrate. Residues N96 and 119 to 121 (ITN) each bind NAD(+). N121 and R152 together coordinate substrate. The Proton acceptor role is filled by H176.

This sequence belongs to the LDH/MDH superfamily. MDH type 3 family.

It catalyses the reaction (S)-malate + NAD(+) = oxaloacetate + NADH + H(+). Its function is as follows. Catalyzes the reversible oxidation of malate to oxaloacetate. In Rhizobium meliloti (strain 1021) (Ensifer meliloti), this protein is Malate dehydrogenase.